The sequence spans 253 residues: Phosphoadenosine 5'-phosphosulfate reductase (253 aa).

The Nucleophile; cysteine thiosulfonate intermediate role is filled by Cys239.

Belongs to the PAPS reductase family. CysH subfamily.

It localises to the cytoplasm. The enzyme catalyses [thioredoxin]-disulfide + sulfite + adenosine 3',5'-bisphosphate + 2 H(+) = [thioredoxin]-dithiol + 3'-phosphoadenylyl sulfate. The protein operates within sulfur metabolism; hydrogen sulfide biosynthesis; sulfite from sulfate: step 3/3. Catalyzes the formation of sulfite from phosphoadenosine 5'-phosphosulfate (PAPS) using thioredoxin as an electron donor. This is Phosphoadenosine 5'-phosphosulfate reductase from Aliivibrio salmonicida (strain LFI1238) (Vibrio salmonicida (strain LFI1238)).